Reading from the N-terminus, the 96-residue chain is Small ribosomal subunit protein bS16 (96 aa).

The protein belongs to the bacterial ribosomal protein bS16 family.

The protein is Small ribosomal subunit protein bS16 of Anaplasma phagocytophilum (strain HZ).